The sequence spans 275 residues: NH(3)-dependent NAD(+) synthetase (275 aa).

An ATP-binding site is contributed by 46-53 (GISGGQDS). Mg(2+) is bound at residue D52. Deamido-NAD(+) is bound at residue R140. T160 serves as a coordination point for ATP. E165 lines the Mg(2+) pocket. Residues K173 and D180 each coordinate deamido-NAD(+). Residues K189 and T211 each contribute to the ATP site. Residue 260–261 (HK) coordinates deamido-NAD(+).

The protein belongs to the NAD synthetase family. Homodimer.

The enzyme catalyses deamido-NAD(+) + NH4(+) + ATP = AMP + diphosphate + NAD(+) + H(+). It participates in cofactor biosynthesis; NAD(+) biosynthesis; NAD(+) from deamido-NAD(+) (ammonia route): step 1/1. Its function is as follows. Catalyzes the ATP-dependent amidation of deamido-NAD to form NAD. Uses ammonia as a nitrogen source. This chain is NH(3)-dependent NAD(+) synthetase, found in Salmonella arizonae (strain ATCC BAA-731 / CDC346-86 / RSK2980).